The primary structure comprises 138 residues: ATP synthase epsilon chain (138 aa).

It belongs to the ATPase epsilon chain family. As to quaternary structure, F-type ATPases have 2 components, CF(1) - the catalytic core - and CF(0) - the membrane proton channel. CF(1) has five subunits: alpha(3), beta(3), gamma(1), delta(1), epsilon(1). CF(0) has four main subunits: a(1), b(1), b'(1) and c(9-12).

It is found in the cellular thylakoid membrane. In terms of biological role, produces ATP from ADP in the presence of a proton gradient across the membrane. Its function is as follows. The complex from the organism is particularly stable to disruption and remains functional after 6 hours at 55 degrees Celsius. The sequence is that of ATP synthase epsilon chain from Thermosynechococcus vestitus (strain NIES-2133 / IAM M-273 / BP-1).